The primary structure comprises 656 residues: MLAVRRRGLRVLAVAPLRVRGLATTSTEFMEGEALTPKTVGPYMSERLEEFRPERIRNFSIVAHIDHGKSTLADRLLESSGNISRQERESAQFLDNLKVERERGITVKAQTASMLHRDSKTGESFMLNLVDTPGHVDFSYEVNRSLSACEGVLLLVDCSQGIQAQTLATYYAAKERNLHVVPVLTKIDMPHAEVDDSILSLSSLLDVDPDEVLLTSAKSGDGINDVLPAVVERLPPPVECDPAAPLRCLLVDSYYDDYRGTVCLVKVVDGAISPGDKIYSAHQKTKHDVQETGLLLPGRYKTKGLYAGQVGYIIAGMKSTTEAKVGDTFFREGAASADLKALPGFQEARSMVFASMYPTDDSSFDELRVAIEKLTLNDASVTAQQETSGALGMGFRCGFLGLLHMEVFHQRLSDEQGIQVMVTAPMVPYTVIDPNGEHLTVETPGAFPESTKYYEILEPMVEASIITPASYLGPVLALAKEKRGVQTNLVYLEDERIIVTIDVPWQEVVTNFYNELKTISSGYATLNYREIEPQKADIVKVDLLINGKVLDALSFVCHRSRATPDGRALCQKLKRVIDRQQYEISIQAALGGKIFAKERIAPYRKDVLIKSGKTVGGGDSTRKKKLLAKQKQGKRRMRTVANVQLSQDAFWSVLSK.

Residues 1–29 (MLAVRRRGLRVLAVAPLRVRGLATTSTEF) constitute a mitochondrion transit peptide. One can recognise a tr-type G domain in the interval 54–238 (ERIRNFSIVA…AVVERLPPPV (185 aa)). Residues 63-70 (AHIDHGKS), 131-135 (DTPGH), and 185-188 (TKID) contribute to the GTP site.

The protein belongs to the TRAFAC class translation factor GTPase superfamily. Classic translation factor GTPase family. LepA subfamily.

The protein resides in the mitochondrion inner membrane. The enzyme catalyses GTP + H2O = GDP + phosphate + H(+). In terms of biological role, promotes mitochondrial protein synthesis. May act as a fidelity factor of the translation reaction, by catalyzing a one-codon backward translocation of tRNAs on improperly translocated ribosomes. Binds to mitochondrial ribosomes in a GTP-dependent manner. The chain is Translation factor GUF1 homolog, mitochondrial from Phytophthora infestans (strain T30-4) (Potato late blight agent).